Reading from the N-terminus, the 167-residue chain is 6,7-dimethyl-8-ribityllumazine synthase (167 aa).

5-amino-6-(D-ribitylamino)uracil-binding positions include phenylalanine 26, 60-62, and 89-91; these read AFE and AII. 94–95 is a binding site for (2S)-2-hydroxy-3-oxobutyl phosphate; sequence ET. Histidine 97 acts as the Proton donor in catalysis. Phenylalanine 122 contacts 5-amino-6-(D-ribitylamino)uracil. Arginine 136 lines the (2S)-2-hydroxy-3-oxobutyl phosphate pocket.

It belongs to the DMRL synthase family. Forms an icosahedral capsid composed of 60 subunits, arranged as a dodecamer of pentamers.

It carries out the reaction (2S)-2-hydroxy-3-oxobutyl phosphate + 5-amino-6-(D-ribitylamino)uracil = 6,7-dimethyl-8-(1-D-ribityl)lumazine + phosphate + 2 H2O + H(+). The protein operates within cofactor biosynthesis; riboflavin biosynthesis; riboflavin from 2-hydroxy-3-oxobutyl phosphate and 5-amino-6-(D-ribitylamino)uracil: step 1/2. In terms of biological role, catalyzes the formation of 6,7-dimethyl-8-ribityllumazine by condensation of 5-amino-6-(D-ribitylamino)uracil with 3,4-dihydroxy-2-butanone 4-phosphate. This is the penultimate step in the biosynthesis of riboflavin. In Ruthia magnifica subsp. Calyptogena magnifica, this protein is 6,7-dimethyl-8-ribityllumazine synthase.